The chain runs to 298 residues: GTP cyclohydrolase FolE2 (298 aa).

This sequence belongs to the GTP cyclohydrolase IV family.

The enzyme catalyses GTP + H2O = 7,8-dihydroneopterin 3'-triphosphate + formate + H(+). It functions in the pathway cofactor biosynthesis; 7,8-dihydroneopterin triphosphate biosynthesis; 7,8-dihydroneopterin triphosphate from GTP: step 1/1. Converts GTP to 7,8-dihydroneopterin triphosphate. The chain is GTP cyclohydrolase FolE2 from Pseudomonas aeruginosa (strain LESB58).